The following is a 396-amino-acid chain: Cytochrome b (396 aa).

4 consecutive transmembrane segments (helical) span residues 32 to 52, 76 to 98, 113 to 133, and 179 to 199; these read FGSLLGVNLVILIISGLTLAM, WLLRYIHANGASFFFIWVYLHIG, LWSIGVVIFILMMATAFIGYV, and FFSLHYLLPFILAALVVMHLL. 2 residues coordinate heme b: histidine 82 and histidine 96. Residues histidine 183 and histidine 197 each coordinate heme b. Histidine 202 is an a ubiquinone binding site. 4 consecutive transmembrane segments (helical) span residues 225–245, 289–309, 321–341, and 348–368; these read FTSKDLVGFVWMAILLSIFVF, LGGVIAMFGALLILFPLALIH, LLNLLFWIFVFNFFVLLWVGA, and YILIGQISTIIYFLYFVILMI.

The protein belongs to the cytochrome b family. In terms of assembly, fungal cytochrome b-c1 complex contains 10 subunits; 3 respiratory subunits, 2 core proteins and 5 low-molecular weight proteins. Cytochrome b-c1 complex is a homodimer. The cofactor is heme b.

The protein localises to the mitochondrion inner membrane. Functionally, component of the ubiquinol-cytochrome c reductase complex (complex III or cytochrome b-c1 complex) that is part of the mitochondrial respiratory chain. The b-c1 complex mediates electron transfer from ubiquinol to cytochrome c. Contributes to the generation of a proton gradient across the mitochondrial membrane that is then used for ATP synthesis. This chain is Cytochrome b (cob), found in Spizellomyces punctatus.